Here is a 192-residue protein sequence, read N- to C-terminus: Calcium-binding protein K (192 aa).

EF-hand domains follow at residues 60–95 (WDEASMVRMFTLFDSDGNGVIDVKEFITALYLMAKA) and 96–131 (PTLDKLGFFFDLFDSDKSGYLEREEVDKLVNIVVCC). Residues Asp73, Asp75, Asn77, Glu84, Asp109, Asp111, Ser113, Tyr115, and Glu120 each coordinate Ca(2+).

The protein belongs to the recoverin family.

In Dictyostelium discoideum (Social amoeba), this protein is Calcium-binding protein K (cbpK).